Here is a 309-residue protein sequence, read N- to C-terminus: Maintenance of mitochondrial morphology protein 1 (309 aa).

The Lumenal segment spans residues 1-16; it reads MGNAYIFSLQPTFTQG. Residues 17 to 37 traverse the membrane as a helical segment; it reads LILGQFSILFLLVLVLKYLFF. The Cytoplasmic portion of the chain corresponds to 38–309; sequence DTVSDHAYRT…EQQAGELPVN (272 aa). Positions 84 to 293 constitute an SMP-LTD domain; the sequence is ECESADWLNA…LPGLASVSEV (210 aa).

This sequence belongs to the MMM1 family. In terms of assembly, homodimer. Component of the ER-mitochondria encounter structure (ERMES) or MDM complex, composed of MMM1, MDM10, MDM12 and MDM34. An MMM1 homodimer associates with one molecule of MDM12 on each side in a pairwise head-to-tail manner, and the SMP-LTD domains of MMM1 and MDM12 generate a continuous hydrophobic tunnel for phospholipid trafficking.

The protein resides in the endoplasmic reticulum membrane. Component of the ERMES/MDM complex, which serves as a molecular tether to connect the endoplasmic reticulum (ER) and mitochondria. Components of this complex are involved in the control of mitochondrial shape and protein biogenesis, and function in nonvesicular lipid trafficking between the ER and mitochondria. The MDM12-MMM1 subcomplex functions in the major beta-barrel assembly pathway that is responsible for biogenesis of all outer membrane beta-barrel proteins, and acts in a late step after the SAM complex. The MDM10-MDM12-MMM1 subcomplex further acts in the TOM40-specific pathway after the action of the MDM12-MMM1 complex. Essential for establishing and maintaining the structure of mitochondria and maintenance of mtDNA nucleoids. This Postia placenta (strain ATCC 44394 / Madison 698-R) (Brown rot fungus) protein is Maintenance of mitochondrial morphology protein 1.